Reading from the N-terminus, the 126-residue chain is Protein ApaG (126 aa).

Residues 2-126 (DVIQPCIKIQ…FRLAIPNVLN (125 aa)) enclose the ApaG domain.

This is Protein ApaG from Vibrio campbellii (strain ATCC BAA-1116).